The primary structure comprises 102 residues: Large ribosomal subunit protein bL21 (102 aa).

This sequence belongs to the bacterial ribosomal protein bL21 family. In terms of assembly, part of the 50S ribosomal subunit. Contacts protein L20.

Its function is as follows. This protein binds to 23S rRNA in the presence of protein L20. The protein is Large ribosomal subunit protein bL21 of Macrococcus caseolyticus (strain JCSC5402) (Macrococcoides caseolyticum).